We begin with the raw amino-acid sequence, 752 residues long: Double zinc ribbon and ankyrin repeat-containing protein 1 (752 aa).

DZANK-type zinc fingers lie at residues 210–270 and 338–386; these read CPKC…VVCE and CSKC…GGCG. Positions 448–469 are enriched in basic and acidic residues; that stretch reads KKRSQQREAELSRQEQMRDRKP. Disordered regions lie at residues 448-471 and 536-614; these read KKRS…KPLL and PPEE…VGPE. Residues 536-554 show a composition bias toward low complexity; sequence PPEESRSSSAGQRSRSVTS. The segment covering 555–580 has biased composition (polar residues); it reads ESQNLSSVTEGRNSASPENNINTTGS. Positions 600–614 are enriched in basic and acidic residues; it reads PESKDSLLLKEVGPE. ANK repeat units lie at residues 638 to 667, 672 to 703, and 707 to 737; these read DGRP…DVNQ, LKNT…SIRK, and RGQT…GLLL.

The protein resides in the cytoplasm. It localises to the cytoskeleton. It is found in the microtubule organizing center. Its subcellular location is the centrosome. The protein localises to the cilium basal body. Required for the intracellular transport of organelles and vesicles, and is essential for the photoreceptor's outer segments formation, maintenance and function. The chain is Double zinc ribbon and ankyrin repeat-containing protein 1 (dzank1) from Danio rerio (Zebrafish).